The primary structure comprises 303 residues: Glycine betaine/carnitine/choline-binding protein OpuCC (303 aa).

A signal peptide spans 1–20; that stretch reads MTKIKWLGAFALVFVMLLGG. Cys-21 is lipidated: N-palmitoyl cysteine. Cys-21 carries the S-diacylglycerol cysteine lipid modification.

It belongs to the OsmX family. The complex is composed of two ATP-binding proteins (OpuCA), two transmembrane proteins (OpuCB and OpuCD) and a solute-binding protein (OpuCC).

It is found in the cell membrane. Member of a high affinity multicomponent binding-protein-dependent transport system for glycine betaine, carnitine, and choline. In Bacillus subtilis (strain 168), this protein is Glycine betaine/carnitine/choline-binding protein OpuCC (opuCC).